The chain runs to 388 residues: Succinate--CoA ligase [ADP-forming] subunit beta (388 aa).

Residues 9-244 form the ATP-grasp domain; the sequence is KSLFAEYGLP…PSQDDAREAH (236 aa). ATP contacts are provided by residues Lys46, 53–55, Glu99, Thr102, and Glu107; that span reads GRG. Mg(2+) is bound by residues Asn199 and Asp213. Residues Asn264 and 321–323 contribute to the substrate site; that span reads GIV.

The protein belongs to the succinate/malate CoA ligase beta subunit family. As to quaternary structure, heterotetramer of two alpha and two beta subunits. Mg(2+) serves as cofactor.

It carries out the reaction succinate + ATP + CoA = succinyl-CoA + ADP + phosphate. The enzyme catalyses GTP + succinate + CoA = succinyl-CoA + GDP + phosphate. The protein operates within carbohydrate metabolism; tricarboxylic acid cycle; succinate from succinyl-CoA (ligase route): step 1/1. Succinyl-CoA synthetase functions in the citric acid cycle (TCA), coupling the hydrolysis of succinyl-CoA to the synthesis of either ATP or GTP and thus represents the only step of substrate-level phosphorylation in the TCA. The beta subunit provides nucleotide specificity of the enzyme and binds the substrate succinate, while the binding sites for coenzyme A and phosphate are found in the alpha subunit. The chain is Succinate--CoA ligase [ADP-forming] subunit beta from Shewanella sp. (strain ANA-3).